Consider the following 981-residue polypeptide: Serine/threonine-protein kinase D1044.8 (981 aa).

Residues 453-725 (YELLDQLGAG…MCGVRLLEYL (273 aa)) enclose the Protein kinase domain. Residues 459-467 (LGAGAFGCV) and K488 each bind ATP. D591 functions as the Proton acceptor in the catalytic mechanism. The segment covering 735 to 746 (TSDMTASQSSYN) has biased composition (polar residues). Disordered regions lie at residues 735–802 (TSDM…PSSI) and 823–847 (IPSRRRVQTCSTEHPARSSSSTELK). The span at 752–762 (SPSSLNSSTSS) shows a compositional bias: low complexity. A compositionally biased stretch (polar residues) spans 830-847 (QTCSTEHPARSSSSTELK).

It belongs to the protein kinase superfamily. NEK Ser/Thr protein kinase family. NIMA subfamily. Requires Mg(2+) as cofactor.

The enzyme catalyses L-seryl-[protein] + ATP = O-phospho-L-seryl-[protein] + ADP + H(+). The catalysed reaction is L-threonyl-[protein] + ATP = O-phospho-L-threonyl-[protein] + ADP + H(+). The protein is Serine/threonine-protein kinase D1044.8 (nekl-4) of Caenorhabditis elegans.